The chain runs to 233 residues: Adapter protein MecA (233 aa).

Belongs to the MecA family. Homodimer.

Enables the recognition and targeting of unfolded and aggregated proteins to the ClpC protease or to other proteins involved in proteolysis. The polypeptide is Adapter protein MecA (Lactococcus lactis subsp. lactis (strain IL1403) (Streptococcus lactis)).